Consider the following 414-residue polypeptide: Acetate kinase (414 aa).

N7 provides a ligand contact to Mg(2+). K14 lines the ATP pocket. A substrate-binding site is contributed by R99. Residue D157 is the Proton donor/acceptor of the active site. ATP-binding positions include 217-221 and 341-345; these read HLGNG and GIGEN. Mg(2+) is bound at residue E395.

The protein belongs to the acetokinase family. As to quaternary structure, homodimer. Requires Mg(2+) as cofactor. It depends on Mn(2+) as a cofactor.

The protein localises to the cytoplasm. It carries out the reaction acetate + ATP = acetyl phosphate + ADP. It functions in the pathway metabolic intermediate biosynthesis; acetyl-CoA biosynthesis; acetyl-CoA from acetate: step 1/2. In terms of biological role, catalyzes the formation of acetyl phosphate from acetate and ATP. Can also catalyze the reverse reaction. This chain is Acetate kinase, found in Solibacter usitatus (strain Ellin6076).